A 710-amino-acid polypeptide reads, in one-letter code: Pentatricopeptide repeat-containing protein At3g14330 (710 aa).

PPR repeat units follow at residues 166–196 (NPKLLSKLITLFSVCRRLDLARKIFDDVTDS), 200–234 (TEKVWAAMAIGYSRNGSPRDALIVYVDMLCSFIEP), 235–269 (GNFSISVALKACVDLKDLRVGRGIHAQIVKRKEKV), 270–304 (DQVVYNVLLKLYMESGLFDDARKVFDGMSERNVVT), 305–331 (WNSLISVLSKKVRVHEMFNLFRKMQEE), 336–370 (SWATLTTILPACSRVAALLTGKEIHAQILKSKEKP), 371–401 (DVPLLNSLMDMYGKCGEVEYSRRVFDVMLTK), 402–436 (DLASWNIMLNCYAINGNIEEVINLFEWMIESGVAP), 437–467 (DGITFVALLSGCSDTGLTEYGLSLFERMKTE), and 473–503 (ALEHYACLVDILGRAGKIKEAVKVIETMPFK). The segment at 508 to 583 (IWGSLLNSCR…EAGCSWVQVK (76 aa)) is type E motif. The tract at residues 584 to 615 (DKIQIFVAGGGYEFRNSDEYKKVWTELQEAIE) is type E(+) motif. Residues 616–710 (KSGYSPNTSV…DGICSCKDYW (95 aa)) form a type DYW motif region.

The protein belongs to the PPR family. PCMP-H subfamily.

This chain is Pentatricopeptide repeat-containing protein At3g14330 (PCMP-H57), found in Arabidopsis thaliana (Mouse-ear cress).